The chain runs to 263 residues: tRNA pseudouridine synthase A (263 aa).

Asp51 functions as the Nucleophile in the catalytic mechanism. Position 106 (Tyr106) interacts with substrate.

This sequence belongs to the tRNA pseudouridine synthase TruA family.

The enzyme catalyses uridine(38/39/40) in tRNA = pseudouridine(38/39/40) in tRNA. Functionally, formation of pseudouridine at positions 38, 39 and 40 in the anticodon stem and loop of transfer RNAs. This Pyrococcus abyssi (strain GE5 / Orsay) protein is tRNA pseudouridine synthase A.